The chain runs to 201 residues: Orotate phosphoribosyltransferase (201 aa).

5-phospho-alpha-D-ribose 1-diphosphate is bound at residue 113 to 121; that stretch reads EDIITTGKS. Positions 117 and 145 each coordinate orotate.

Belongs to the purine/pyrimidine phosphoribosyltransferase family. PyrE subfamily. In terms of assembly, homodimer. Mg(2+) is required as a cofactor.

The enzyme catalyses orotidine 5'-phosphate + diphosphate = orotate + 5-phospho-alpha-D-ribose 1-diphosphate. It participates in pyrimidine metabolism; UMP biosynthesis via de novo pathway; UMP from orotate: step 1/2. Functionally, catalyzes the transfer of a ribosyl phosphate group from 5-phosphoribose 1-diphosphate to orotate, leading to the formation of orotidine monophosphate (OMP). This is Orotate phosphoribosyltransferase from Helicobacter pylori (strain G27).